The following is a 231-amino-acid chain: Probable transglycosylase SceD (231 aa).

The signal sequence occupies residues 1–27 (MKKTLLASSLAVGLGIVAGNAGHEAHA). Positions 103–116 (APSAVQANQVQSQE) are enriched in polar residues. Residues 103 to 153 (APSAVQANQVQSQEVEAPQNAQTQQPQASTSNNSQVTATPTESKSSEGSSV) are disordered. Residues 119–137 (APQNAQTQQPQASTSNNSQ) show a composition bias toward low complexity. Positions 138–153 (VTATPTESKSSEGSSV) are enriched in polar residues.

This sequence belongs to the transglycosylase family. SceD subfamily.

The protein resides in the secreted. Its function is as follows. Is able to cleave peptidoglycan and affects clumping and separation of bacterial cells. This is Probable transglycosylase SceD (sceD) from Staphylococcus aureus (strain COL).